The sequence spans 474 residues: Nucleobindin-1 (474 aa).

Positions 1–24 (MPPSGPRAALFLLPSLLLLRAVLA) are cleaved as a signal peptide. S83 is subject to Phosphoserine. T145 bears the Phosphothreonine mark. A coiled-coil region spans residues 147–215 (EARDLELLIQ…QQRRHREHPK (69 aa)). The segment covering 190-207 (SLGEEQRKEAERKLEEQQ) has biased composition (basic and acidic residues). The tract at residues 190 to 218 (SLGEEQRKEAERKLEEQQRRHREHPKVNV) is disordered. Residues 225 to 318 (LKEVWEELDG…VTLEEFLAST (94 aa)) are binds to GNAI2 and GNAI3. 2 EF-hand domains span residues 237-272 (PNRF…ELEK) and 289-324 (ERLR…KEFG). 8 residues coordinate Ca(2+): D250, N252, D254, E261, D302, N304, D306, and E313. The GBA motif lies at 300–330 (NVDTNQDRLVTLEEFLASTQRKEFGDTGEGW). Residues 355–422 (AYTEEELRRF…RKQQQQSHNN (68 aa)) adopt a coiled-coil conformation. Residues 382-474 (LSQETEALGR…EPPQLDSQHL (93 aa)) are disordered. S383 is modified (phosphoserine). The segment covering 448–460 (DQKDVDASEKKVP) has biased composition (basic and acidic residues). The residue at position 471 (S471) is a Phosphoserine.

The protein belongs to the nucleobindin family. As to quaternary structure, interacts (via GBA motif) with guanine nucleotide-binding protein G(i) alpha subunits GNAI1, GNAI2 and GNAI3 with higher affinity for GNAI1 and GNAI3 than for GNAI2. Preferentially interacts with inactive rather than active GNAI3. Interaction with GNAI3 is inhibited when NUCB1 binds calcium, probably due to a conformational change which renders the GBA motif inaccessible. Expressed in bone where it is detected in the soft tissue in the center of the osteon and in the osteocyte lacuna (at protein level).

It localises to the golgi apparatus. It is found in the cis-Golgi network membrane. Its subcellular location is the cytoplasm. The protein resides in the secreted. Its function is as follows. Major calcium-binding protein of the Golgi which may have a role in calcium homeostasis. Acts as a non-receptor guanine nucleotide exchange factor which binds to and activates alpha subunits of guanine nucleotide-binding proteins (G proteins). In Bos taurus (Bovine), this protein is Nucleobindin-1 (NUCB1).